A 172-amino-acid polypeptide reads, in one-letter code: NADH-ubiquinone oxidoreductase chain 6 (172 aa).

A run of 5 helical transmembrane segments spans residues 1–21, 27–47, 48–68, 87–107, and 138–158; these read MTYF…AVAS, YGVV…LSLG, ISFV…VVFV, VVGY…VGGF, and CGVG…FVVL.

This sequence belongs to the complex I subunit 6 family.

The protein localises to the mitochondrion membrane. The enzyme catalyses a ubiquinone + NADH + 5 H(+)(in) = a ubiquinol + NAD(+) + 4 H(+)(out). Its function is as follows. Core subunit of the mitochondrial membrane respiratory chain NADH dehydrogenase (Complex I) that is believed to belong to the minimal assembly required for catalysis. Complex I functions in the transfer of electrons from NADH to the respiratory chain. The immediate electron acceptor for the enzyme is believed to be ubiquinone. The chain is NADH-ubiquinone oxidoreductase chain 6 (MT-ND6) from Uria aalge (Common mure).